Reading from the N-terminus, the 398-residue chain is Putative tyrosine-protein phosphatase C15H7.3 (398 aa).

The span at 1-15 shows a compositional bias: basic residues; sequence MERSQKSARKKKKTS. The interval 1–114 is disordered; the sequence is MERSQKSARK…EPWSEEEPAK (114 aa). Residues 18 to 40 are compositionally biased toward basic and acidic residues; that stretch reads GNDRSIRSERKSKQKKPAGEKSQ. The segment covering 41 to 50 has biased composition (basic residues); sequence KSRRTRKSRG. A compositionally biased stretch (polar residues) spans 55-73; the sequence is GFTSRETIQPSSSGQSEGT. The segment covering 74-114 has biased composition (basic and acidic residues); the sequence is TRMDDQKDEKKDDKKEEKKEERKEEKKEEVKEPWSEEEPAK. The Tyrosine-protein phosphatase domain occupies 125 to 376; that stretch reads TNVGGTFKQT…GTVHRSMACW (252 aa).

This sequence belongs to the protein-tyrosine phosphatase family. Non-receptor class subfamily.

It catalyses the reaction O-phospho-L-tyrosyl-[protein] + H2O = L-tyrosyl-[protein] + phosphate. In Caenorhabditis elegans, this protein is Putative tyrosine-protein phosphatase C15H7.3.